The sequence spans 502 residues: Phenylacetaldehyde dehydrogenase (502 aa).

251 to 256 (GSTEVG) contacts NAD(+). Active-site residues include E273 and C307.

This sequence belongs to the aldehyde dehydrogenase family.

It catalyses the reaction 2-phenylacetaldehyde + NAD(+) + H2O = 2-phenylacetate + NADH + 2 H(+). It functions in the pathway aromatic compound metabolism. In terms of biological role, phenylacetaldehyde dehydrogenase that catalyzes the last step in the aerobic styrene degradation pathway by mediating oxidation of phenylacetaldehyde to phenylacetic acid. The polypeptide is Phenylacetaldehyde dehydrogenase (styD) (Pseudomonas fluorescens).